The primary structure comprises 248 residues: Transcriptional activator protein FnrL (248 aa).

The 79-residue stretch at 154-232 (KTAREKIASL…KRHVIVTDFA (79 aa)) folds into the HTH crp-type domain. A DNA-binding region (H-T-H motif) is located at residues 191–210 (REEMADYLGLTLETVSRQVS).

Functionally, anaerobic regulatory protein; transcriptional activator of hemA. Appears to regulate other genes. The chain is Transcriptional activator protein FnrL (fnrL) from Cereibacter sphaeroides (strain ATCC 17023 / DSM 158 / JCM 6121 / CCUG 31486 / LMG 2827 / NBRC 12203 / NCIMB 8253 / ATH 2.4.1.) (Rhodobacter sphaeroides).